A 342-amino-acid polypeptide reads, in one-letter code: Ferredoxin--NADP reductase (342 aa).

FAD is bound by residues Cys-17, Asp-36, Gln-44, Tyr-49, Ile-89, Phe-124, Asp-289, and Thr-330.

It belongs to the ferredoxin--NADP reductase type 2 family. Homodimer. The cofactor is FAD.

It carries out the reaction 2 reduced [2Fe-2S]-[ferredoxin] + NADP(+) + H(+) = 2 oxidized [2Fe-2S]-[ferredoxin] + NADPH. The sequence is that of Ferredoxin--NADP reductase from Rhodopseudomonas palustris (strain HaA2).